A 570-amino-acid chain; its full sequence is MTTKTTPKELKAKKESKKKGSAPEPPKNGPPRTSPPNTIEKKGILRSLSFQFSNLTRKKGNDYDLTPEEEGDGYGDEMGPVLGVQNYGILMKKYKRKNRSARWAKRFFVLKECFLIYYSTSYKKVFEKTRRIDLHPKGIIPLIGCSIVSGGDVDKKNCLLIAHPQLPSAIIVAASDHQTQEMWLKALRSATKISYKNTVVGETMIRELENRGVLLNEEKKSYEERLEAEAKARKEEHDRADELAKDKEELEAEREKLIRTTKKLKDDLQNVKNELKMTNEMKKTLEQEKMSLNSKTEHLQANMESLNIEKEKIHEQLQEIVREREKVLIDNQNLSTDKCQLNNRLMEIETSRNCIMTEKEKIENLLKMNEQKTQDLEKERQYYTMKTSELMDHLKEVSEQRDLTESELKEQMMARLGAEKQLQAAEKALEHLEMALKMTGAQMTELQEHIMPDVHKLREFFEQCAEESRFEANRTGIMRNAVYARKSIFDVAFSELDGHSLDVFEKFCEYNSQVLPVREKPQKLHKTWKQSSFKRIGSIRRSKRGIRSSFRKKTDSITTQPREKEPLMQL.

Basic and acidic residues predominate over residues 1 to 13 (MTTKTTPKELKAK). The interval 1-42 (MTTKTTPKELKAKKESKKKGSAPEPPKNGPPRTSPPNTIEKK) is disordered. The segment covering 23–34 (PEPPKNGPPRTS) has biased composition (pro residues). Residues 83–192 (GVQNYGILMK…WLKALRSATK (110 aa)) form the PH domain. A coiled-coil region spans residues 202–448 (ETMIRELENR…TGAQMTELQE (247 aa)). Basic residues predominate over residues 542-551 (SKRGIRSSFR). The interval 542 to 570 (SKRGIRSSFRKKTDSITTQPREKEPLMQL) is disordered. The span at 561-570 (PREKEPLMQL) shows a compositional bias: basic and acidic residues.

The protein belongs to the PLEKHD1 family.

The sequence is that of Pleckstrin homology domain-containing family D member 1 from Caenorhabditis elegans.